We begin with the raw amino-acid sequence, 610 residues long: ESX-5 secretion system protein EccA5 (610 aa).

Residue Gly357–Thr364 participates in ATP binding.

Belongs to the CbxX/CfxQ family. Part of the ESX-5 / type VII secretion system (T7SS), which is composed of cytosolic and membrane components.

It localises to the cytoplasm. In terms of biological role, part of the ESX-5 specialized secretion system, which is responsible for the secretion of EsxN and a number of PE_PGRS and PPE proteins. EccA5 exhibits ATPase activity and may provide energy for the export of ESX-5 substrates. The chain is ESX-5 secretion system protein EccA5 from Mycobacterium marinum (strain ATCC BAA-535 / M).